We begin with the raw amino-acid sequence, 296 residues long: NAD kinase (296 aa).

The active-site Proton acceptor is D72. Residues 72-73 (DG), 146-147 (ND), R157, K174, D176, 187-192 (TAYALS), and Q247 contribute to the NAD(+) site.

The protein belongs to the NAD kinase family. Requires a divalent metal cation as cofactor.

It localises to the cytoplasm. It carries out the reaction NAD(+) + ATP = ADP + NADP(+) + H(+). In terms of biological role, involved in the regulation of the intracellular balance of NAD and NADP, and is a key enzyme in the biosynthesis of NADP. Catalyzes specifically the phosphorylation on 2'-hydroxyl of the adenosine moiety of NAD to yield NADP. The polypeptide is NAD kinase (Pseudomonas entomophila (strain L48)).